A 403-amino-acid chain; its full sequence is Imidazolonepropionase (403 aa).

Fe(3+) is bound by residues histidine 69 and histidine 71. 2 residues coordinate Zn(2+): histidine 69 and histidine 71. 4-imidazolone-5-propanoate contacts are provided by arginine 78, tyrosine 141, and histidine 174. Tyrosine 141 serves as a coordination point for N-formimidoyl-L-glutamate. Histidine 239 serves as a coordination point for Fe(3+). Histidine 239 provides a ligand contact to Zn(2+). 4-imidazolone-5-propanoate is bound at residue glutamine 242. Position 314 (aspartate 314) interacts with Fe(3+). Position 314 (aspartate 314) interacts with Zn(2+). Asparagine 316 and glycine 318 together coordinate N-formimidoyl-L-glutamate. Serine 319 serves as a coordination point for 4-imidazolone-5-propanoate.

It belongs to the metallo-dependent hydrolases superfamily. HutI family. It depends on Zn(2+) as a cofactor. Fe(3+) serves as cofactor.

Its subcellular location is the cytoplasm. It carries out the reaction 4-imidazolone-5-propanoate + H2O = N-formimidoyl-L-glutamate. Its pathway is amino-acid degradation; L-histidine degradation into L-glutamate; N-formimidoyl-L-glutamate from L-histidine: step 3/3. Its function is as follows. Catalyzes the hydrolytic cleavage of the carbon-nitrogen bond in imidazolone-5-propanoate to yield N-formimidoyl-L-glutamate. It is the third step in the universal histidine degradation pathway. This is Imidazolonepropionase from Legionella pneumophila (strain Corby).